The primary structure comprises 408 residues: Argininosuccinate synthase (408 aa).

ATP contacts are provided by residues 10–18 (AYSGGLDTS) and Ala-37. L-citrulline contacts are provided by Tyr-90 and Ser-95. Gly-120 lines the ATP pocket. Residues Thr-122, Asn-126, and Asp-127 each contribute to the L-aspartate site. Position 126 (Asn-126) interacts with L-citrulline. L-citrulline is bound by residues Arg-130, Ser-182, Ser-191, Glu-267, and Tyr-279.

It belongs to the argininosuccinate synthase family. Type 1 subfamily. Homotetramer.

It localises to the cytoplasm. The enzyme catalyses L-citrulline + L-aspartate + ATP = 2-(N(omega)-L-arginino)succinate + AMP + diphosphate + H(+). It participates in amino-acid biosynthesis; L-arginine biosynthesis; L-arginine from L-ornithine and carbamoyl phosphate: step 2/3. This chain is Argininosuccinate synthase, found in Paraburkholderia xenovorans (strain LB400).